A 138-amino-acid chain; its full sequence is MRTLWIMAVLLVGVEGNLWQFGKMMNYVMGQSVVYKYFYYGCYCGWGGIGQPRDATDRCCFVHDCCYGKVTGCDPKTDSYTYSKENGDVVCGGDDPCKKQICECDRVAATCFRDNKDTYDMKYWLYGAKNCQEESEPC.

A signal peptide spans 1–16 (MRTLWIMAVLLVGVEG). Intrachain disulfides connect C42–C131, C44–C60, C59–C111, C65–C138, C66–C104, C73–C97, and C91–C102. 3 residues coordinate Ca(2+): Y43, G45, and G47. The active site involves H63. D64 lines the Ca(2+) pocket. The active site involves D105.

Requires Ca(2+) as cofactor. In terms of tissue distribution, expressed by the venom gland.

It localises to the secreted. It carries out the reaction a 1,2-diacyl-sn-glycero-3-phosphocholine + H2O = a 1-acyl-sn-glycero-3-phosphocholine + a fatty acid + H(+). Its function is as follows. Snake venom phospholipase A2 (PLA2) that induces edema in mice, produces neuromuscular blockade in chick biventer cervicis, increases CK release and produces myonecrosis. PLA2 catalyzes the calcium-dependent hydrolysis of the 2-acyl groups in 3-sn-phosphoglycerides. The protein is Acidic phospholipase A2 BITP01A of Bothrops insularis (Golden lancehead).